The following is a 215-amino-acid chain: 3-isopropylmalate dehydratase small subunit (215 aa).

Belongs to the LeuD family. LeuD type 1 subfamily. As to quaternary structure, heterodimer of LeuC and LeuD.

The catalysed reaction is (2R,3S)-3-isopropylmalate = (2S)-2-isopropylmalate. Its pathway is amino-acid biosynthesis; L-leucine biosynthesis; L-leucine from 3-methyl-2-oxobutanoate: step 2/4. Its function is as follows. Catalyzes the isomerization between 2-isopropylmalate and 3-isopropylmalate, via the formation of 2-isopropylmaleate. The sequence is that of 3-isopropylmalate dehydratase small subunit from Hahella chejuensis (strain KCTC 2396).